Here is a 168-residue protein sequence, read N- to C-terminus: Disulfide bond formation protein B (168 aa).

The Cytoplasmic segment spans residues 1–13 (MFLTYFDAMPRRV). Residues 14 to 30 (LALVSLACVALLAFGLY) traverse the membrane as a helical segment. The Periplasmic portion of the chain corresponds to 31–48 (LQHVVGLEPCPMCIVQRY). Cys-40 and Cys-43 form a disulfide bridge. A helical membrane pass occupies residues 49–64 (ALVLVAVVAGITAVAK). Residues 65 to 70 (SRGLLI) are Cytoplasmic-facing. Residues 71–88 (TGSGLLVLLSGFGAFVAA) traverse the membrane as a helical segment. The Periplasmic segment spans residues 89-144 (RQSFLQWYPPEVASCGRDFYGMIETFPLKRAIPMIFKGSGDCTKIDWTFLGLSIAN). Cys-103 and Cys-130 are disulfide-bonded. The helical transmembrane segment at 145–163 (WSFLCFVAIALVGLVLITR) threads the bilayer. Residues 164-168 (LARQR) are Cytoplasmic-facing.

Belongs to the DsbB family.

The protein resides in the cell inner membrane. Its function is as follows. Required for disulfide bond formation in some periplasmic proteins. Acts by oxidizing the DsbA protein. The sequence is that of Disulfide bond formation protein B from Polaromonas sp. (strain JS666 / ATCC BAA-500).